The primary structure comprises 117 residues: Large ribosomal subunit protein uL18 (117 aa).

This sequence belongs to the universal ribosomal protein uL18 family. Part of the 50S ribosomal subunit; part of the 5S rRNA/L5/L18/L25 subcomplex. Contacts the 5S and 23S rRNAs.

In terms of biological role, this is one of the proteins that bind and probably mediate the attachment of the 5S RNA into the large ribosomal subunit, where it forms part of the central protuberance. The chain is Large ribosomal subunit protein uL18 from Serratia proteamaculans (strain 568).